A 150-amino-acid polypeptide reads, in one-letter code: PTTG1IP family member 2 (150 aa).

A signal peptide spans 1 to 19; it reads MCWLRAWSHILLPVFLSVA. Topologically, residues 20–98 are extracellular; that stretch reads LIQLIFNLSD…SIFWANCNVD (79 aa). Asn26 carries an N-linked (GlcNAc...) asparagine glycan. A helical membrane pass occupies residues 99 to 119; the sequence is LFGIVMLILIVILALAFLWYC. Topologically, residues 120-150 are cytoplasmic; sequence LAYYFYMQQHMALYARHGQVPVYNWDAPGDW.

It localises to the membrane. This chain is PTTG1IP family member 2, found in Mus musculus (Mouse).